A 430-amino-acid chain; its full sequence is tRNA(Ile)-lysidine synthase (430 aa).

21–26 contacts ATP; the sequence is SGGLDS.

This sequence belongs to the tRNA(Ile)-lysidine synthase family.

The protein localises to the cytoplasm. It catalyses the reaction cytidine(34) in tRNA(Ile2) + L-lysine + ATP = lysidine(34) in tRNA(Ile2) + AMP + diphosphate + H(+). Ligates lysine onto the cytidine present at position 34 of the AUA codon-specific tRNA(Ile) that contains the anticodon CAU, in an ATP-dependent manner. Cytidine is converted to lysidine, thus changing the amino acid specificity of the tRNA from methionine to isoleucine. This is tRNA(Ile)-lysidine synthase from Salmonella agona (strain SL483).